The primary structure comprises 208 residues: Fibroblast growth factor 6 (208 aa).

Residues 1 to 37 (MALGQKLFITMSRGAGRLQGTLWALVFLGILVGMVVP) form the signal peptide. An N-linked (GlcNAc...) asparagine glycan is attached at N45. The cysteines at positions 90 and 157 are disulfide-linked.

This sequence belongs to the heparin-binding growth factors family. In terms of assembly, interacts with FGFR1, FGFR2 and FGFR4. Affinity between fibroblast growth factors (FGFs) and their receptors is increased by heparan sulfate glycosaminoglycans that function as coreceptors. In terms of tissue distribution, leukemia cell lines with platelet/ megakaryocytic differentiation potential.

It localises to the secreted. The protein localises to the extracellular space. Its function is as follows. Plays an important role in the regulation of cell proliferation, cell differentiation, angiogenesis and myogenesis, and is required for normal muscle regeneration. The sequence is that of Fibroblast growth factor 6 (FGF6) from Homo sapiens (Human).